The following is a 702-amino-acid chain: Dissimilatory sulfite reductase MccA (702 aa).

The first 39 residues, 1 to 39 (MLSGWSVLKGGNMKYWDKALLSLFMCVSTLSIAATHAVA), serve as a signal peptide directing secretion. Positions 155, 158, 159, and 171 each coordinate heme c. The substrate site is built by Lys-220 and Tyr-297. Heme c-binding residues include Cys-314, Cys-317, His-318, Cys-351, Cys-354, His-355, His-360, Cys-372, Cys-375, and His-376. Residue Arg-378 coordinates substrate. Position 411 (Cys-411) interacts with Cu(+). Heme c is bound by residues His-423, Cys-430, Cys-433, His-434, His-437, Cys-474, Cys-477, His-478, His-491, Cys-496, Cys-499, and His-500. Position 507 (Cys-507) interacts with Cu(+). His-528, Cys-574, Cys-590, His-591, and His-675 together coordinate heme c.

The protein belongs to the multiheme cytochrome c family. As to quaternary structure, homotrimer. The cofactor is Cu(+). Heme c is required as a cofactor.

Its subcellular location is the periplasm. It catalyses the reaction [protein]-disulfide + hydrogen sulfide + 2 A + 3 H2O = [protein]-dithiol + sulfite + 2 AH2 + H(+). Its pathway is sulfur metabolism; sulfite reduction. Functionally, respiratory sulfite reductase that catalyzes the reduction of sulfite to sulfide in a single step, consuming six electrons in the process. Required for sulfite respiration under anaerobic growth conditions. Has only marginal activity with nitrite. The protein is Dissimilatory sulfite reductase MccA of Wolinella succinogenes (strain ATCC 29543 / DSM 1740 / CCUG 13145 / JCM 31913 / LMG 7466 / NCTC 11488 / FDC 602W) (Vibrio succinogenes).